The sequence spans 322 residues: Ribosomal RNA large subunit methyltransferase F (322 aa).

This sequence belongs to the methyltransferase superfamily. METTL16/RlmF family.

It localises to the cytoplasm. The catalysed reaction is adenosine(1618) in 23S rRNA + S-adenosyl-L-methionine = N(6)-methyladenosine(1618) in 23S rRNA + S-adenosyl-L-homocysteine + H(+). Functionally, specifically methylates the adenine in position 1618 of 23S rRNA. This Cytophaga hutchinsonii (strain ATCC 33406 / DSM 1761 / CIP 103989 / NBRC 15051 / NCIMB 9469 / D465) protein is Ribosomal RNA large subunit methyltransferase F.